The chain runs to 227 residues: PKHD-type hydroxylase Swit_4046 (227 aa).

Positions 78 to 178 (KVFPPLFNLY…RLCSFFWIQS (101 aa)) constitute a Fe2OG dioxygenase domain. 3 residues coordinate Fe cation: His96, Asp98, and His159. A 2-oxoglutarate-binding site is contributed by Arg169.

Fe(2+) is required as a cofactor. L-ascorbate serves as cofactor.

In Rhizorhabdus wittichii (strain DSM 6014 / CCUG 31198 / JCM 15750 / NBRC 105917 / EY 4224 / RW1) (Sphingomonas wittichii), this protein is PKHD-type hydroxylase Swit_4046.